Consider the following 296-residue polypeptide: Glycine N-acyltransferase (296 aa).

An N6-acetyllysine; alternate modification is found at Lys16. Position 16 is an N6-succinyllysine; alternate (Lys16). Lys113 bears the N6-acetyllysine mark. 2 positions are modified to N6-acetyllysine; alternate: Lys127 and Lys142. Lys127 and Lys142 each carry N6-succinyllysine; alternate. Lys159 carries the post-translational modification N6-acetyllysine. N6-succinyllysine is present on Lys169. 2 positions are modified to N6-acetyllysine; alternate: Lys183 and Lys256. 2 positions are modified to N6-succinyllysine; alternate: Lys183 and Lys256. Lys267 bears the N6-succinyllysine mark.

The protein belongs to the glycine N-acyltransferase family.

It localises to the mitochondrion. It carries out the reaction an acyl-CoA + glycine = an N-acylglycine + CoA + H(+). It catalyses the reaction benzoyl-CoA + glycine = N-benzoylglycine + CoA + H(+). Its function is as follows. Mitochondrial acyltransferase which transfers an acyl group to the N-terminus of glycine and glutamine, although much less efficiently. Can conjugate a multitude of substrates to form a variety of N-acylglycines, thereby detoxify xenobiotics, such as benzoic acid or salicylic acid, and endogenous organic acids, such as isovaleric acid. This Rattus norvegicus (Rat) protein is Glycine N-acyltransferase (Glyat).